The chain runs to 159 residues: Neuroglobin-2 (159 aa).

One can recognise a Globin domain in the interval 3-151 (KLTEKDKELI…VVAAMSRGWA (149 aa)). Positions 66 and 98 each coordinate heme b.

The protein belongs to the globin family. As to quaternary structure, monomer. Homodimers and homotetramers. Mainly monomeric but also detected as part of homodimers and homotetramers.

The protein resides in the cytoplasm. It is found in the cytosol. It localises to the mitochondrion matrix. The catalysed reaction is Fe(III)-heme b-[protein] + nitric oxide + H2O = Fe(II)-heme b-[protein] + nitrite + 2 H(+). Its function is as follows. Monomeric globin with a bis-histidyl six-coordinate heme-iron atom through which it can bind dioxygen, carbon monoxide and nitric oxide. Could help transport oxygen and increase its availability to the metabolically active neuronal tissues, though its low quantity in tissues as well as its high affinity for dioxygen, which may limit its oxygen-releasing ability, argue against it. The ferrous/deoxygenated form exhibits a nitrite reductase activity and it could produce nitric oxide which in turn inhibits cellular respiration in response to hypoxia. In its ferrous/deoxygenated state, it may also exhibit GDI (Guanine nucleotide Dissociation Inhibitor) activity toward heterotrimeric G-alpha proteins, thereby regulating signal transduction to facilitate neuroprotective responses in the wake of hypoxia and associated oxidative stress. The protein is Neuroglobin-2 (ngb2) of Oncorhynchus mykiss (Rainbow trout).